A 323-amino-acid polypeptide reads, in one-letter code: D-specific alpha-keto acid dehydrogenase (323 aa).

NAD(+) contacts are provided by residues His157 to Ile158, Thr230 to Arg232, and Asp256. Arg232 is an active-site residue. Glu261 is an active-site residue. Residue His293 is the Proton donor of the active site. His293 to Tyr296 contacts NAD(+).

It belongs to the D-isomer specific 2-hydroxyacid dehydrogenase family.

In terms of biological role, required for high-level resistance to glycopeptides antibiotics. Catalyzes the reduction of 2-keto acids to 2-D-hydroxy acids that give rise to peptidoglycan precursors that terminate in the depsipeptide D-alanine-2-lactate rather than the dipeptide D-alanine-D-alanine thus preventing vancomycin binding. This Enterococcus faecalis (strain ATCC 700802 / V583) protein is D-specific alpha-keto acid dehydrogenase (vanHB).